The sequence spans 551 residues: NAD(P)H-quinone oxidoreductase chain 4 (551 aa).

The next 14 helical transmembrane spans lie at 25–45 (FPWL…VPFI), 56–76 (WFAL…YLNG), 111–131 (LILL…PVTF), 133–153 (PKLF…VFAV), 157–177 (LLFF…LAIW), 189–209 (FILY…AMGF), 233–253 (LLCY…VPLH), 264–284 (TAPV…YALM), 298–318 (FAPL…LTSF), 335–355 (MGFV…GAML), 356–376 (QMIS…ATYD), 397–417 (FALW…SGFV), 438–458 (IVID…LLSM), and 485–505 (VYII…PRLM).

It belongs to the complex I subunit 4 family.

The protein resides in the cellular thylakoid membrane. It carries out the reaction a plastoquinone + NADH + (n+1) H(+)(in) = a plastoquinol + NAD(+) + n H(+)(out). It catalyses the reaction a plastoquinone + NADPH + (n+1) H(+)(in) = a plastoquinol + NADP(+) + n H(+)(out). NDH-1 shuttles electrons from NAD(P)H, via FMN and iron-sulfur (Fe-S) centers, to quinones in the respiratory chain. The immediate electron acceptor for the enzyme in this species is believed to be plastoquinone. Couples the redox reaction to proton translocation (for every two electrons transferred, four hydrogen ions are translocated across the cytoplasmic membrane), and thus conserves the redox energy in a proton gradient. In Synechococcus sp. (strain WH7803), this protein is NAD(P)H-quinone oxidoreductase chain 4.